A 573-amino-acid polypeptide reads, in one-letter code: Isocitrate dehydrogenase kinase/phosphatase (573 aa).

ATP contacts are provided by residues 317 to 323 and Lys338; that span reads APGVRGM. The active site involves Asp373.

Belongs to the AceK family.

The protein localises to the cytoplasm. The catalysed reaction is L-seryl-[isocitrate dehydrogenase] + ATP = O-phospho-L-seryl-[isocitrate dehydrogenase] + ADP + H(+). Functionally, bifunctional enzyme which can phosphorylate or dephosphorylate isocitrate dehydrogenase (IDH) on a specific serine residue. This is a regulatory mechanism which enables bacteria to bypass the Krebs cycle via the glyoxylate shunt in response to the source of carbon. When bacteria are grown on glucose, IDH is fully active and unphosphorylated, but when grown on acetate or ethanol, the activity of IDH declines drastically concomitant with its phosphorylation. In Pseudomonas fluorescens (strain Pf0-1), this protein is Isocitrate dehydrogenase kinase/phosphatase.